A 61-amino-acid polypeptide reads, in one-letter code: Small ribosomal subunit protein uS14 (61 aa).

Positions 24, 27, 40, and 43 each coordinate Zn(2+).

Belongs to the universal ribosomal protein uS14 family. Zinc-binding uS14 subfamily. As to quaternary structure, part of the 30S ribosomal subunit. Contacts proteins S3 and S10. The cofactor is Zn(2+).

Functionally, binds 16S rRNA, required for the assembly of 30S particles and may also be responsible for determining the conformation of the 16S rRNA at the A site. This is Small ribosomal subunit protein uS14 from Nitratidesulfovibrio vulgaris (strain DSM 19637 / Miyazaki F) (Desulfovibrio vulgaris).